Reading from the N-terminus, the 496-residue chain is 3-octaprenyl-4-hydroxybenzoate carboxy-lyase (496 aa).

Asparagine 181 contributes to the Mn(2+) binding site. Prenylated FMN-binding positions include 184–186, 198–200, and 203–204; these read IYR, RWL, and RG. Glutamate 247 is a Mn(2+) binding site. The active-site Proton donor is aspartate 296.

This sequence belongs to the UbiD family. In terms of assembly, homohexamer. Requires prenylated FMN as cofactor. Mn(2+) is required as a cofactor.

The protein localises to the cell membrane. It catalyses the reaction a 4-hydroxy-3-(all-trans-polyprenyl)benzoate + H(+) = a 2-(all-trans-polyprenyl)phenol + CO2. Its pathway is cofactor biosynthesis; ubiquinone biosynthesis. Catalyzes the decarboxylation of 3-octaprenyl-4-hydroxy benzoate to 2-octaprenylphenol, an intermediate step in ubiquinone biosynthesis. This chain is 3-octaprenyl-4-hydroxybenzoate carboxy-lyase, found in Azoarcus sp. (strain BH72).